The primary structure comprises 500 residues: Glycerol kinase (500 aa).

Residue Thr13 participates in ADP binding. ATP-binding residues include Thr13, Thr14, and Ser15. Sn-glycerol 3-phosphate is bound at residue Thr13. Arg17 is a binding site for ADP. 4 residues coordinate sn-glycerol 3-phosphate: Arg83, Glu84, Tyr135, and Asp244. Glycerol contacts are provided by Arg83, Glu84, Tyr135, Asp244, and Gln245. ADP-binding residues include Thr266, Gly309, Gly410, and Asn414. ATP contacts are provided by Thr266, Gly309, and Gly410.

The protein belongs to the FGGY kinase family.

It carries out the reaction glycerol + ATP = sn-glycerol 3-phosphate + ADP + H(+). Its pathway is polyol metabolism; glycerol degradation via glycerol kinase pathway; sn-glycerol 3-phosphate from glycerol: step 1/1. Its activity is regulated as follows. Inhibited by fructose 1,6-bisphosphate (FBP). Its function is as follows. Key enzyme in the regulation of glycerol uptake and metabolism. Catalyzes the phosphorylation of glycerol to yield sn-glycerol 3-phosphate. This Chromobacterium violaceum (strain ATCC 12472 / DSM 30191 / JCM 1249 / CCUG 213 / NBRC 12614 / NCIMB 9131 / NCTC 9757 / MK) protein is Glycerol kinase.